Reading from the N-terminus, the 144-residue chain is Large ribosomal subunit protein uL14 (144 aa).

Positions 107-144 are disordered; sequence NEGYTHSQHSNQREGGERIQAQPSPPHARRAVKTSFCR.

The protein belongs to the universal ribosomal protein uL14 family. Part of the 50S ribosomal subunit. Forms a cluster with proteins L3 and L19. In the 70S ribosome, L14 and L19 interact and together make contacts with the 16S rRNA in bridges B5 and B8.

Binds to 23S rRNA. Forms part of two intersubunit bridges in the 70S ribosome. The sequence is that of Large ribosomal subunit protein uL14 from Xanthobacter autotrophicus (strain ATCC BAA-1158 / Py2).